The primary structure comprises 342 residues: Dysbindin (342 aa).

Ser11 is modified (phosphoserine). Residues Leu83 to Lys180 are a coiled coil. Residues Leu243–Leu256 carry the Nuclear export signal motif. The disordered stretch occupies residues Asn263–Ser342. Residues Pro286 to Pro305 are compositionally biased toward low complexity. Residues Ser316, Ser321, and Ser340 each carry the phosphoserine modification.

Belongs to the dysbindin family. As to quaternary structure, interacts (via its coiled coil domain) with KXD1. Interacts with CMYA5, PI4K2 and RNF151. Component of the biogenesis of lysosome-related organelles complex 1 (BLOC-1) composed of at least BLOC1S1, BLOC1S2, BLOC1S3, BLOC1S4, BLOC1S5, BLOC1S6, DTNBP1/BLOC1S7 and SNAPIN/BLOC1S8. Interacts directly in the complex with BLOC1S5, BLOC1S6 and SNAPIN/BLOC1S8. The BLOC-1 complex associates with the AP-3 protein complex and membrane protein cargos. This BLOC-1 complex also associates with the BLOC-2 complex in endosomes. Binds to DTNA and DTNB but may not be a physiological binding partner. Interacts with the DNA-dependent protein kinase complex DNA-PK; the interaction phosphorylates DTNBP1 in vitro. Interacts directly in this complex with XRCC5 and XRCC6. Interacts with AP3M1, AP3B2 and TRIM32. Interacts with XPO1; the interaction exports DTNBP1 out of the nucleus. In terms of processing, ubiquitinated by TRIM32. Ubiquitination leads to DTNBP1 degradation.

It localises to the cytoplasm. The protein resides in the cytoplasmic vesicle membrane. It is found in the cytoplasmic vesicle. The protein localises to the secretory vesicle. Its subcellular location is the synaptic vesicle membrane. It localises to the endosome membrane. The protein resides in the melanosome membrane. It is found in the nucleus. The protein localises to the postsynaptic density. Its subcellular location is the presynaptic cell membrane. It localises to the endoplasmic reticulum. Component of the BLOC-1 complex, a complex that is required for normal biogenesis of lysosome-related organelles (LRO), such as platelet dense granules and melanosomes. In concert with the AP-3 complex, the BLOC-1 complex is required to target membrane protein cargos into vesicles assembled at cell bodies for delivery into neurites and nerve terminals. The BLOC-1 complex, in association with SNARE proteins, is also proposed to be involved in neurite extension. Associates with the BLOC-2 complex to facilitate the transport of TYRP1 independent of AP-3 function. Plays a role in synaptic vesicle trafficking and in neurotransmitter release. Plays a role in the regulation of cell surface exposure of DRD2. May play a role in actin cytoskeleton reorganization and neurite outgrowth. May modulate MAPK8 phosphorylation. Appears to promote neuronal transmission and viability through regulating the expression of SNAP25 and SYN1, modulating PI3-kinase-Akt signaling and influencing glutamatergic release. Regulates the expression of SYN1 through binding to its promoter. Modulates prefrontal cortical activity via the dopamine/D2 pathway. This is Dysbindin (DTNBP1) from Bos taurus (Bovine).